Here is a 396-residue protein sequence, read N- to C-terminus: Elongation factor Tu (396 aa).

The region spanning 10–207 (KPHCNIGTIG…VDAYIPQPPR (198 aa)) is the tr-type G domain. Residues 19–26 (GHVDHGKT) form a G1 region. Residue 19 to 26 (GHVDHGKT) coordinates GTP. Mg(2+) is bound at residue Thr26. Positions 60–64 (GITIS) are G2. The interval 81 to 84 (DCPG) is G3. GTP contacts are provided by residues 81–85 (DCPGH) and 136–139 (NKVD). Positions 136 to 139 (NKVD) are G4. The G5 stretch occupies residues 174 to 176 (SAL).

The protein belongs to the TRAFAC class translation factor GTPase superfamily. Classic translation factor GTPase family. EF-Tu/EF-1A subfamily. Monomer.

The protein resides in the cytoplasm. It catalyses the reaction GTP + H2O = GDP + phosphate + H(+). GTP hydrolase that promotes the GTP-dependent binding of aminoacyl-tRNA to the A-site of ribosomes during protein biosynthesis. In Novosphingobium aromaticivorans (strain ATCC 700278 / DSM 12444 / CCUG 56034 / CIP 105152 / NBRC 16084 / F199), this protein is Elongation factor Tu.